Reading from the N-terminus, the 446-residue chain is Solute carrier family 52, riboflavin transporter, member 2 (446 aa).

4 consecutive transmembrane segments (helical) span residues 14 to 34, 47 to 67, 79 to 99, and 104 to 124; these read LLVA…WVEL, LPSY…VVTL, APIQ…APLW, and VMAG…LALA. The N-linked (GlcNAc...) asparagine glycan is linked to Asn129. Transmembrane regions (helical) follow at residues 147 to 167 and 196 to 216; these read FFLG…GQGV and FFGA…GLLL. The interval 228–267 is disordered; the sequence is GSGTGLRGGAPGVEEEEEEEASPLQEPPSQAAGNTPSPDP. Residues 229-238 are compositionally biased toward gly residues; that stretch reads SGTGLRGGAP. The span at 254–263 shows a compositional bias: polar residues; that stretch reads PPSQAAGNTP. 5 helical membrane-spanning segments follow: residues 278–298, 313–333, 340–360, 367–387, and 405–425; these read ACLL…LPAV, LAVV…MGIL, LGGL…LAIL, VGTS…LGVF, and ALLA…VTMF.

It belongs to the riboflavin transporter family.

It is found in the cell membrane. It catalyses the reaction riboflavin(in) = riboflavin(out). Its activity is regulated as follows. Riboflavin transport is Na(+)-independent but moderately pH-sensitive. Activity is strongly inhibited by riboflavin analogs, such as lumiflavin. Weakly inhibited by flavin adenine dinucleotide (FAD) and flavin mononucleotide (FMN). Plasma membrane transporter mediating the uptake by cells of the water soluble vitamin B2/riboflavin that plays a key role in biochemical oxidation-reduction reactions of the carbohydrate, lipid, and amino acid metabolism. May also act as a receptor for 4-hydroxybutyrate. Its function is as follows. (Microbial infection) In case of infection by porcine endogenous retrovirus (PERV-A), acts as a cell receptor to retroviral envelopes. This chain is Solute carrier family 52, riboflavin transporter, member 2 (SLC52A2), found in Sus scrofa (Pig).